Reading from the N-terminus, the 155-residue chain is Pathogenesis-related protein STH-2 (155 aa).

It belongs to the BetVI family.

This Solanum tuberosum (Potato) protein is Pathogenesis-related protein STH-2 (STH-2).